The chain runs to 112 residues: Larval cuticle protein 3 (112 aa).

The first 16 residues, 1–16 (MFKILLVCSLAALVAA), serve as a signal peptide directing secretion. The Chitin-binding type R&amp;R domain maps to 31–92 (PDGFVSKLVL…PQSDLLPTPP (62 aa)).

Component of the larval cuticle. In Drosophila melanogaster (Fruit fly), this protein is Larval cuticle protein 3 (Lcp3).